The sequence spans 199 residues: NAD(P)H dehydrogenase (quinone) (199 aa).

The 187-residue stretch at 4–190 (VLVLYHSMYG…AIARFQGKHV (187 aa)) folds into the Flavodoxin-like domain. FMN is bound by residues 10–15 (SMYGHI) and 79–81 (TRF). Residue Y12 coordinates NAD(+). W99 contacts substrate. Position 134 (H134) interacts with FMN.

It belongs to the WrbA family. FMN serves as cofactor.

It carries out the reaction a quinone + NADH + H(+) = a quinol + NAD(+). It catalyses the reaction a quinone + NADPH + H(+) = a quinol + NADP(+). This chain is NAD(P)H dehydrogenase (quinone), found in Tolumonas auensis (strain DSM 9187 / NBRC 110442 / TA 4).